The chain runs to 72 residues: UPF0270 protein YheU (72 aa).

Belongs to the UPF0270 family.

The polypeptide is UPF0270 protein YheU (Escherichia coli (strain UTI89 / UPEC)).